The chain runs to 135 residues: Transcriptional regulator HosA (135 aa).

The 131-residue stretch at 4–134 (RNKAFHQLRQ…FMQLVRKMMN (131 aa)) folds into the HTH marR-type domain. Residues 48–71 (QVALIEAAVSTKATLAEMLARMEN) constitute a DNA-binding region (H-T-H motif).

Its function is as follows. Involved in the temperature-dependent positive control of flagellum-driven swimming motility and cellular aggregation. Regulates fliC expression by directly interacting with fliC promoter. This chain is Transcriptional regulator HosA (hosA), found in Escherichia coli O127:H6 (strain E2348/69 / EPEC).